Here is a 566-residue protein sequence, read N- to C-terminus: Oxygen-dependent choline dehydrogenase (566 aa).

7 to 36 (DYIICGAGSAGNVLATRLTEDPDVTVLLLE) provides a ligand contact to FAD. The disordered stretch occupies residues 180-202 (NGYQQEGFGPMDRTVTPKGRRAS). Catalysis depends on His-474, which acts as the Proton acceptor.

This sequence belongs to the GMC oxidoreductase family. The cofactor is FAD.

The catalysed reaction is choline + A = betaine aldehyde + AH2. It carries out the reaction betaine aldehyde + NAD(+) + H2O = glycine betaine + NADH + 2 H(+). It participates in amine and polyamine biosynthesis; betaine biosynthesis via choline pathway; betaine aldehyde from choline (cytochrome c reductase route): step 1/1. Functionally, involved in the biosynthesis of the osmoprotectant glycine betaine. Catalyzes the oxidation of choline to betaine aldehyde and betaine aldehyde to glycine betaine at the same rate. In Burkholderia cenocepacia (strain HI2424), this protein is Oxygen-dependent choline dehydrogenase.